Reading from the N-terminus, the 142-residue chain is Ribonuclease VapC31 (142 aa).

The PINc domain maps to 3–139; the sequence is LLDANVLLAA…ARFASVRHIR (137 aa). Mg(2+) is bound by residues Asp5 and Asp108.

This sequence belongs to the PINc/VapC protein family. Mg(2+) is required as a cofactor.

Its function is as follows. Toxic component of a type II toxin-antitoxin (TA) system. An RNase. Its toxic effect is neutralized by coexpression with cognate antitoxin VapB31. The protein is Ribonuclease VapC31 of Mycobacterium tuberculosis (strain CDC 1551 / Oshkosh).